We begin with the raw amino-acid sequence, 336 residues long: DNA-directed RNA polymerase subunit alpha (336 aa).

Positions 1 to 232 are alpha N-terminal domain (alpha-NTD); that stretch reads MIQKNWQELI…DQLSVFVNFD (232 aa). An alpha C-terminal domain (alpha-CTD) region spans residues 248 to 336; it reads FNPALLKKVD…DLAKRYEDQY (89 aa).

This sequence belongs to the RNA polymerase alpha chain family. Homodimer. The RNAP catalytic core consists of 2 alpha, 1 beta, 1 beta' and 1 omega subunit. When a sigma factor is associated with the core the holoenzyme is formed, which can initiate transcription.

The catalysed reaction is RNA(n) + a ribonucleoside 5'-triphosphate = RNA(n+1) + diphosphate. DNA-dependent RNA polymerase catalyzes the transcription of DNA into RNA using the four ribonucleoside triphosphates as substrates. The chain is DNA-directed RNA polymerase subunit alpha from Sinorhizobium medicae (strain WSM419) (Ensifer medicae).